Reading from the N-terminus, the 252-residue chain is N-glycosylase/DNA lyase (252 aa).

Residues Q32, S60, and W71 each coordinate 8-oxoguanine. The helix-hairpin-helix stretch occupies residues 129–193 (KTYYSDMEKL…KDSRIEKYTL (65 aa)). K153 serves as the catalytic Schiff-base intermediate with DNA. 8-oxoguanine is bound by residues F157 and P183. D185 is a catalytic residue. D219 and W223 together coordinate 8-oxoguanine.

Belongs to the archaeal N-glycosylase/DNA lyase (AGOG) family.

It carries out the reaction 2'-deoxyribonucleotide-(2'-deoxyribose 5'-phosphate)-2'-deoxyribonucleotide-DNA = a 3'-end 2'-deoxyribonucleotide-(2,3-dehydro-2,3-deoxyribose 5'-phosphate)-DNA + a 5'-end 5'-phospho-2'-deoxyribonucleoside-DNA + H(+). Its function is as follows. DNA repair enzyme that is part of the base excision repair (BER) pathway; protects from oxidative damage by removing the major product of DNA oxidation, 8-oxoguanine (GO), from single- and double-stranded DNA substrates. This chain is N-glycosylase/DNA lyase, found in Methanococcus maripaludis (strain DSM 14266 / JCM 13030 / NBRC 101832 / S2 / LL).